The following is a 117-amino-acid chain: NADH dehydrogenase [ubiquinone] 1 beta subcomplex subunit 9 (117 aa).

An N-acetylserine modification is found at Ser2.

The protein belongs to the complex I LYR family. As to quaternary structure, complex I is composed of at least 49 different subunits. Expressed in roots, stems, flowers, rosette leaves, cauline leaves and siliques, with the highest expression in the stems.

It localises to the mitochondrion inner membrane. Accessory subunit of the mitochondrial membrane respiratory chain NADH dehydrogenase (Complex I), that is believed to be not involved in catalysis. Complex I functions in the transfer of electrons from NADH to the respiratory chain. The immediate electron acceptor for the enzyme is believed to be ubiquinone. Is required for correct plant growth and development. The protein is NADH dehydrogenase [ubiquinone] 1 beta subcomplex subunit 9 (CIB22) of Arabidopsis thaliana (Mouse-ear cress).